The primary structure comprises 208 residues: uncharacterized protein (208 aa).

The segment covering M1–G18 has biased composition (basic and acidic residues). Disordered stretches follow at residues M1–P122 and R135–G208.

This is an uncharacterized protein from Homo sapiens (Human).